Here is a 142-residue protein sequence, read N- to C-terminus: Large ribosomal subunit protein uL11 (142 aa).

Belongs to the universal ribosomal protein uL11 family. Part of the ribosomal stalk of the 50S ribosomal subunit. Interacts with L10 and the large rRNA to form the base of the stalk. L10 forms an elongated spine to which L12 dimers bind in a sequential fashion forming a multimeric L10(L12)X complex. One or more lysine residues are methylated.

Its function is as follows. Forms part of the ribosomal stalk which helps the ribosome interact with GTP-bound translation factors. This is Large ribosomal subunit protein uL11 from Klebsiella pneumoniae subsp. pneumoniae (strain ATCC 700721 / MGH 78578).